The following is a 218-amino-acid chain: MPMTLGYWDIRGLAHAIRLLLEYTGSSYEEKRYTMGDAPDYDRSQWLSEKFKLGLDFPNLPYLIDGSHKITQSNAILRYIARKHNLCGETEEEKIRVDILENQAMDVSNQLARVCYSPDFEKLKVEYLEQLPGMVKLFSQFLGQRTWFVGEKITFVDFLAYDILDLHLIFEPTCLDAFPNLKDFVARFEVLKRISAYMKTSRFLRTPLYTKVATWGNK.

The region spanning 1 to 88 (MPMTLGYWDI…YIARKHNLCG (88 aa)) is the GST N-terminal domain. Residues 7–8 (YW), 46–50 (WLSEK), 59–60 (NL), and 72–73 (QS) each bind glutathione. Residues 90–208 (TEEEKIRVDI…KTSRFLRTPL (119 aa)) enclose the GST C-terminal domain. Tyr116 is a substrate binding site.

This sequence belongs to the GST superfamily. Mu family. As to quaternary structure, homodimer. In terms of tissue distribution, widely expressed.

The protein localises to the cytoplasm. The enzyme catalyses RX + glutathione = an S-substituted glutathione + a halide anion + H(+). The catalysed reaction is 1-chloro-2,4-dinitrobenzene + glutathione = 2,4-dinitrophenyl-S-glutathione + chloride + H(+). It carries out the reaction (13S,14S)-epoxy-(4Z,7Z,9E,11E,16Z,19Z)-docosahexaenoate + glutathione = (13R)-S-glutathionyl-(14S)-hydroxy-(4Z,7Z,9E,11E,16Z,19Z)-docosahexaenoate. It catalyses the reaction leukotriene C4 = leukotriene A4 + glutathione. Functionally, conjugation of reduced glutathione to a wide number of exogenous and endogenous hydrophobic electrophiles. Catalyzes the conjugation of leukotriene A4 with reduced glutathione (GSH) to form leukotriene C4. Can also catalyze the transfer of a glutathionyl group from glutathione (GSH) to 13(S),14(S)-epoxy-docosahexaenoic acid to form maresin conjugate in tissue regeneration 1 (MCTR1), a bioactive lipid mediator that possess potent anti-inflammatory and proresolving actions. In Mus musculus (Mouse), this protein is Glutathione S-transferase Mu 4.